Reading from the N-terminus, the 76-residue chain is Small nuclear ribonucleoprotein G (76 aa).

The Sm domain occupies 4–76 (AHPPELKKFM…IIMLEALERV (73 aa)).

It belongs to the snRNP Sm proteins family. In terms of assembly, core component of the spliceosomal U1, U2, U4 and U5 small nuclear ribonucleoproteins (snRNPs), the building blocks of the spliceosome. Most spliceosomal snRNPs contain a common set of Sm proteins, SNRPB, SNRPD1, SNRPD2, SNRPD3, SNRPE, SNRPF and SNRPG that assemble in a heptameric protein ring on the Sm site of the small nuclear RNA to form the core snRNP. Component of the U1 snRNP. The U1 snRNP is composed of the U1 snRNA and the 7 core Sm proteins SNRPB, SNRPD1, SNRPD2, SNRPD3, SNRPE, SNRPF and SNRPG, and at least three U1 snRNP-specific proteins SNRNP70/U1-70K, SNRPA/U1-A and SNRPC/U1-C. Component of the U4/U6-U5 tri-snRNP complex composed of the U4, U6 and U5 snRNAs and at least PRPF3, PRPF4, PRPF6, PRPF8, PRPF31, SNRNP200, TXNL4A, SNRNP40, SNRPB, SNRPD1, SNRPD2, SNRPD3, SNRPE, SNRPF, SNRPG, DDX23, CD2BP2, PPIH, SNU13, EFTUD2, SART1 and USP39, plus LSM2, LSM3, LSM4, LSM5, LSM6, LSM7 and LSM8. Component of the U7 snRNP complex, or U7 Sm protein core complex, that is composed of the U7 snRNA and at least LSM10, LSM11, SNRPB, SNRPD3, SNRPE, SNRPF and SNRPG; the complex does not contain SNRPD1 and SNRPD2. Component of the minor spliceosome, which splices U12-type introns. Part of the SMN-Sm complex that contains SMN1, GEMIN2/SIP1, DDX20/GEMIN3, GEMIN4, GEMIN5, GEMIN6, GEMIN7, GEMIN8, STRAP/UNRIP and the Sm proteins SNRPB, SNRPD1, SNRPD2, SNRPD3, SNRPE, SNRPF and SNRPG; catalyzes core snRNPs assembly. Forms a 6S pICln-Sm complex composed of CLNS1A/pICln, SNRPD1, SNRPD2, SNRPE, SNRPF and SNRPG; ring-like structure where CLNS1A/pICln mimics additional Sm proteins and which is unable to assemble into the core snRNP. Interacts with GEMIN2 (via N-terminus); the interaction is direct. Interacts with SNRPE; the interaction is direct.

Its subcellular location is the cytoplasm. It localises to the cytosol. The protein resides in the nucleus. Its function is as follows. Plays a role in pre-mRNA splicing as a core component of the spliceosomal U1, U2, U4 and U5 small nuclear ribonucleoproteins (snRNPs), the building blocks of the spliceosome. Component of both the pre-catalytic spliceosome B complex and activated spliceosome C complexes. As a component of the minor spliceosome, involved in the splicing of U12-type introns in pre-mRNAs. As part of the U7 snRNP it is involved in histone 3'-end processing. The protein is Small nuclear ribonucleoprotein G (SNRPG) of Bos taurus (Bovine).